The primary structure comprises 219 residues: MAIFSVYVVNKAGGLIYQLDSYAPRAEAEKTFSYPLDLLLKLHDERVLVAFGQRDGIRVGHAVLAINGMDVNGRYTADGKEVLEYLGNPANYPVSIRFGRPRLTSNEKLMLASMFHSLFAIGSQLSPEQGSSGIEMLETDTFKLHCYQTLTGIKFVVLADPRQAGIDSLLRKIYEIYSDFALKNPFYSLEMPIRCELFDQNLKLALEVAEKAGTFGPGS.

Belongs to the TRAPP small subunits family. TRAPPC4 subfamily. As to quaternary structure, component of the multisubunit TRAPP (transport protein particle) complex, which includes at least TRAPPC2, TRAPPC2L, TRAPPC3, TRAPPC3L, TRAPPC4, TRAPPC5, TRAPPC8, TRAPPC9, TRAPPC10, TRAPPC11 and TRAPPC12. Interacts with SDC2.

The protein localises to the postsynaptic cell membrane. Its subcellular location is the golgi apparatus membrane. It is found in the endoplasmic reticulum. The protein resides in the vesicle. Its function is as follows. Core component of the TRAPP complexes which has a function of guanine nucleotide exchange factor activity for Rab1 GTPase. Plays a role in vesicular transport from endoplasmic reticulum to Golgi and autophagy. May play a role in dendrite postsynaptic membrane trafficking. This is Trafficking protein particle complex subunit 4 from Homo sapiens (Human).